Consider the following 191-residue polypeptide: Putative zinc metalloprotease MJ0611 (191 aa).

The chain crosses the membrane as a helical span at residues 20 to 40; the sequence is AIAFIFSYPNFSILVFIISLI. Residue His49 participates in Zn(2+) binding. Glu50 is a catalytic residue. His53 contacts Zn(2+). Helical transmembrane passes span 73 to 93, 110 to 130, 133 to 153, and 171 to 191; these read LILGFILKLVFGATFIAPGAV, LAGPLTNVALAFVFFILMLIF, GSLLYWIGIFGFHINLFLAGF, and PFIWAIVGLPLIGYMLYMMFW.

The protein belongs to the peptidase M50B family. Requires Zn(2+) as cofactor.

It is found in the cell membrane. The sequence is that of Putative zinc metalloprotease MJ0611 from Methanocaldococcus jannaschii (strain ATCC 43067 / DSM 2661 / JAL-1 / JCM 10045 / NBRC 100440) (Methanococcus jannaschii).